The sequence spans 158 residues: NAD(P)H-quinone oxidoreductase subunit J, chloroplastic (158 aa).

It belongs to the complex I 30 kDa subunit family. In terms of assembly, NDH is composed of at least 16 different subunits, 5 of which are encoded in the nucleus.

It is found in the plastid. The protein resides in the chloroplast thylakoid membrane. The enzyme catalyses a plastoquinone + NADH + (n+1) H(+)(in) = a plastoquinol + NAD(+) + n H(+)(out). The catalysed reaction is a plastoquinone + NADPH + (n+1) H(+)(in) = a plastoquinol + NADP(+) + n H(+)(out). In terms of biological role, NDH shuttles electrons from NAD(P)H:plastoquinone, via FMN and iron-sulfur (Fe-S) centers, to quinones in the photosynthetic chain and possibly in a chloroplast respiratory chain. The immediate electron acceptor for the enzyme in this species is believed to be plastoquinone. Couples the redox reaction to proton translocation, and thus conserves the redox energy in a proton gradient. The protein is NAD(P)H-quinone oxidoreductase subunit J, chloroplastic of Oenothera argillicola (Appalachian evening primrose).